Reading from the N-terminus, the 385-residue chain is Rhomboid domain-containing protein 3 (385 aa).

5 helical membrane-spanning segments follow: residues 13–33 (ALPLASSVLMLLLSCLWLLGA), 58–78 (LGHTALPGLLLSLLLLPTLGW), 93–113 (SAVLALATGLLAVLLAGLGLS), 146–166 (WLLPWLLLALTLLLSSEPPFL), and 168–188 (LLCGLLAGLAYAAGAFRWLEL). Residues 322 to 361 (SVSSLRLQQLQHMGFPTEQAAVALAATGRVEGAVSLLVEG) form the UBA domain.

The protein resides in the membrane. In Rattus norvegicus (Rat), this protein is Rhomboid domain-containing protein 3 (Rhbdd3).